Here is a 268-residue protein sequence, read N- to C-terminus: Homeobox protein Hox-D12 (268 aa).

Residues 102–124 form a disordered region; it reads TPDAPTASEERSRTRPPFAPESS. The segment at residues 200-259 is a DNA-binding region (homeobox); it reads ARKKRKPYTKQQIAELENEFLVNEFINRQKRKELSNRLNLSDQQVKIWFQNRRMKKKRVV.

This sequence belongs to the Abd-B homeobox family.

The protein resides in the nucleus. Functionally, sequence-specific transcription factor which is part of a developmental regulatory system that provides cells with specific positional identities on the anterior-posterior axis. The polypeptide is Homeobox protein Hox-D12 (Hoxd12) (Mus musculus (Mouse)).